We begin with the raw amino-acid sequence, 304 residues long: Large ribosomal subunit protein uL2m (304 aa).

Residues methionine 1 to lysine 60 constitute a mitochondrion transit peptide.

This sequence belongs to the universal ribosomal protein uL2 family. Component of the mitochondrial ribosome large subunit (39S) which comprises a 16S rRNA and about 50 distinct proteins.

The protein resides in the mitochondrion. This is Large ribosomal subunit protein uL2m (Mrpl2) from Rattus norvegicus (Rat).